The primary structure comprises 169 residues: Desumoylating isopeptidase 1 (169 aa).

The 143-residue stretch at His8–Asp150 folds into the PPPDE domain. Residue His39 is part of the active site. Residues Ile84–Leu92 carry the Nuclear export signal 1 motif. Cys109 is a catalytic residue. Residues Pro140–Ile154 carry the Nuclear export signal 2 motif.

The protein belongs to the DeSI family. In terms of assembly, homodimer.

It is found in the cytoplasm. The protein localises to the nucleus. The enzyme catalyses S-hexadecanoyl-L-cysteinyl-[protein] + H2O = L-cysteinyl-[protein] + hexadecanoate + H(+). Its function is as follows. Protease which deconjugates SUMO1, SUMO2 and SUMO3 from some substrate proteins. Has isopeptidase but not SUMO-processing activity. Collaborates with ubqln4 in the export of ubiquitinated proteins from the nucleus to the cytoplasm. Exhibits palmitoyl protein thioesterase (S-depalmitoylation) activity towards synthetic substrates 4-methylumbelliferyl-6-S-palmitoyl-beta-D-glucopyranoside and S-depalmitoylation probe 5 (DPP-5). This Xenopus laevis (African clawed frog) protein is Desumoylating isopeptidase 1.